The sequence spans 134 residues: MGLIVYYSSRSENTHRFVARLGLRAARIPAGGADAFHIREPFVLVVPTYSDGDGKGAVPKQVIRFLNDAENRGHIRGVIAAGNSNFGETYGLAGDVISQKCRVPYLYRFELIGTEEDVANVKHGMERFWTREQL.

Belongs to the NrdI family.

In terms of biological role, probably involved in ribonucleotide reductase function. This Rhizobium leguminosarum bv. trifolii (strain WSM2304) protein is Protein NrdI.